Here is a 340-residue protein sequence, read N- to C-terminus: Anthranilate phosphoribosyltransferase (340 aa).

Residues Gly78, Gly81–Asp82, Thr86, Asn88–Thr91, Lys106–Ser114, and Ser118 contribute to the 5-phospho-alpha-D-ribose 1-diphosphate site. Gly78 provides a ligand contact to anthranilate. Ser90 contributes to the Mg(2+) binding site. Asn109 lines the anthranilate pocket. Arg164 contributes to the anthranilate binding site. Residues Asp223 and Glu224 each coordinate Mg(2+).

The protein belongs to the anthranilate phosphoribosyltransferase family. In terms of assembly, homodimer. Requires Mg(2+) as cofactor.

The enzyme catalyses N-(5-phospho-beta-D-ribosyl)anthranilate + diphosphate = 5-phospho-alpha-D-ribose 1-diphosphate + anthranilate. Its pathway is amino-acid biosynthesis; L-tryptophan biosynthesis; L-tryptophan from chorismate: step 2/5. Functionally, catalyzes the transfer of the phosphoribosyl group of 5-phosphorylribose-1-pyrophosphate (PRPP) to anthranilate to yield N-(5'-phosphoribosyl)-anthranilate (PRA). The protein is Anthranilate phosphoribosyltransferase of Bacillus pumilus (strain SAFR-032).